The following is a 1168-amino-acid chain: DNA-directed RNA polymerase subunit beta (1168 aa).

The protein belongs to the RNA polymerase beta chain family. In terms of assembly, the RNAP catalytic core consists of 2 alpha, 1 beta, 1 beta' and 1 omega subunit. When a sigma factor is associated with the core the holoenzyme is formed, which can initiate transcription.

The enzyme catalyses RNA(n) + a ribonucleoside 5'-triphosphate = RNA(n+1) + diphosphate. Its function is as follows. DNA-dependent RNA polymerase catalyzes the transcription of DNA into RNA using the four ribonucleoside triphosphates as substrates. This Rhodococcus jostii (strain RHA1) protein is DNA-directed RNA polymerase subunit beta.